A 379-amino-acid polypeptide reads, in one-letter code: tRNA-specific 2-thiouridylase MnmA (379 aa).

ATP contacts are provided by residues 9–16 (AMSGGVDS) and Met-35. Residues 94-96 (NPD) form an interaction with target base in tRNA region. Cys-99 (nucleophile) is an active-site residue. A disulfide bridge links Cys-99 with Cys-195. Gly-123 serves as a coordination point for ATP. Residues 145–147 (KDQ) form an interaction with tRNA region. Cys-195 functions as the Cysteine persulfide intermediate in the catalytic mechanism. The interval 307–308 (RY) is interaction with tRNA.

This sequence belongs to the MnmA/TRMU family.

It localises to the cytoplasm. It carries out the reaction S-sulfanyl-L-cysteinyl-[protein] + uridine(34) in tRNA + AH2 + ATP = 2-thiouridine(34) in tRNA + L-cysteinyl-[protein] + A + AMP + diphosphate + H(+). Its function is as follows. Catalyzes the 2-thiolation of uridine at the wobble position (U34) of tRNA, leading to the formation of s(2)U34. This is tRNA-specific 2-thiouridylase MnmA from Xylella fastidiosa (strain 9a5c).